A 267-amino-acid polypeptide reads, in one-letter code: L-aspartate dehydrogenase (267 aa).

NAD(+) contacts are provided by alanine 124 and asparagine 190. Residue histidine 218 is part of the active site.

This sequence belongs to the L-aspartate dehydrogenase family.

It carries out the reaction L-aspartate + NADP(+) + H2O = oxaloacetate + NH4(+) + NADPH + H(+). The catalysed reaction is L-aspartate + NAD(+) + H2O = oxaloacetate + NH4(+) + NADH + H(+). It functions in the pathway cofactor biosynthesis; NAD(+) biosynthesis; iminoaspartate from L-aspartate (dehydrogenase route): step 1/1. Its function is as follows. Specifically catalyzes the NAD or NADP-dependent dehydrogenation of L-aspartate to iminoaspartate. The chain is L-aspartate dehydrogenase from Methanococcus maripaludis (strain C5 / ATCC BAA-1333).